The following is a 338-amino-acid chain: Fructose-1,6-bisphosphatase class 1 (338 aa).

Residues Glu90, Asp112, Leu114, and Asp115 each coordinate Mg(2+). Substrate is bound by residues 115 to 118 (DGSS), Asn207, and Lys273. Glu279 contacts Mg(2+).

The protein belongs to the FBPase class 1 family. As to quaternary structure, homotetramer. Requires Mg(2+) as cofactor.

It is found in the cytoplasm. It carries out the reaction beta-D-fructose 1,6-bisphosphate + H2O = beta-D-fructose 6-phosphate + phosphate. Its pathway is carbohydrate biosynthesis; gluconeogenesis. This chain is Fructose-1,6-bisphosphatase class 1, found in Stenotrophomonas maltophilia (strain K279a).